The primary structure comprises 405 residues: Tryptophan synthase beta chain (405 aa).

At Lys98 the chain carries N6-(pyridoxal phosphate)lysine.

It belongs to the TrpB family. In terms of assembly, tetramer of two alpha and two beta chains. Pyridoxal 5'-phosphate is required as a cofactor.

It carries out the reaction (1S,2R)-1-C-(indol-3-yl)glycerol 3-phosphate + L-serine = D-glyceraldehyde 3-phosphate + L-tryptophan + H2O. The protein operates within amino-acid biosynthesis; L-tryptophan biosynthesis; L-tryptophan from chorismate: step 5/5. Functionally, the beta subunit is responsible for the synthesis of L-tryptophan from indole and L-serine. In Xylella fastidiosa (strain 9a5c), this protein is Tryptophan synthase beta chain (trpB).